A 315-amino-acid chain; its full sequence is Putative protein phosphatase 2C 24 (315 aa).

Residues 71 to 314 (ALRMEAASCF…DDITVVVAYI (244 aa)) form the PPM-type phosphatase domain. Residues Asp-102, Gly-103, Asp-238, and Asp-305 each coordinate Mn(2+).

It belongs to the PP2C family. Mg(2+) is required as a cofactor. Requires Mn(2+) as cofactor.

It catalyses the reaction O-phospho-L-seryl-[protein] + H2O = L-seryl-[protein] + phosphate. It carries out the reaction O-phospho-L-threonyl-[protein] + H2O = L-threonyl-[protein] + phosphate. The chain is Putative protein phosphatase 2C 24 from Oryza sativa subsp. japonica (Rice).